The chain runs to 170 residues: Urease accessory protein UreE (170 aa).

The tract at residues 137–170 is disordered; it reads PFDPESGAYAHAGREQSHAHSHEHSHADGHTHAH. Over residues 148–170 the composition is skewed to basic and acidic residues; it reads AGREQSHAHSHEHSHADGHTHAH.

This sequence belongs to the UreE family.

The protein resides in the cytoplasm. Functionally, involved in urease metallocenter assembly. Binds nickel. Probably functions as a nickel donor during metallocenter assembly. The chain is Urease accessory protein UreE from Pseudoalteromonas translucida (strain TAC 125).